The sequence spans 527 residues: N-acetylglutamate synthase, mitochondrial (527 aa).

A mitochondrion-targeting transit peptide spans 1–39 (MAKVNSGSSGCRAMVMAGQFWTKPFALSSQRSGPHRRSA). Residues 28-65 (SSQRSGPHRRSAAEVNRRMSSSRTAGHGSKTPLWSQQE) are disordered. The segment at 40-83 (AEVNRRMSSSRTAGHGSKTPLWSQQESYNHSSLGERSAWSNRTL) is may stabilize the oligomeric structure. The amino-acid kinase domain (AAK) stretch occupies residues 40 to 361 (AEVNRRMSSS…SGTLFKNGDP (322 aa)). An N-acetyltransferase domain is found at 360 to 511 (DPIRRYSSLE…FAKSHPDSFC (152 aa)). Residues lysine 386, lysine 429, and 459–464 (RSRTTN) each bind substrate.

Belongs to the acetyltransferase family. As to quaternary structure, homodimer. Homotetramer.

It localises to the mitochondrion matrix. The enzyme catalyses L-glutamate + acetyl-CoA = N-acetyl-L-glutamate + CoA + H(+). With respect to regulation, inhibited by L-arginine. Plays a role in the regulation of ureagenesis by producing the essential cofactor N-acetylglutamate (NAG), thus modulating carbamoylphosphate synthase I (cps1) activity. This chain is N-acetylglutamate synthase, mitochondrial, found in Danio rerio (Zebrafish).